A 211-amino-acid polypeptide reads, in one-letter code: Cyclin-dependent kinase inhibitor 3 (211 aa).

Positions M1–V20 are disordered. The segment at M1 to L34 is interaction with CDK2. The region spanning L32–S200 is the Tyrosine-protein phosphatase domain. C140 functions as the Phosphocysteine intermediate in the catalytic mechanism.

Belongs to the protein-tyrosine phosphatase family. Interacts with cyclin-dependent kinases such as CDK1, CDK2 and CDK3. Does not interact with CDK4. Interacts (via C-terminus) with phosphorylated CDK2 (via C-terminal helix). Interacts with MS4A3 (via C-terminus); the interaction enhances CDKN3 enzymatic activity.

The protein resides in the cytoplasm. It localises to the perinuclear region. The catalysed reaction is O-phospho-L-tyrosyl-[protein] + H2O = L-tyrosyl-[protein] + phosphate. It catalyses the reaction O-phospho-L-seryl-[protein] + H2O = L-seryl-[protein] + phosphate. The enzyme catalyses O-phospho-L-threonyl-[protein] + H2O = L-threonyl-[protein] + phosphate. Its function is as follows. May play a role in cell cycle regulation. Dual specificity phosphatase active toward substrates containing either phosphotyrosine or phosphoserine residues. Dephosphorylates CDK2 at 'Thr-160' in a cyclin-dependent manner. This is Cyclin-dependent kinase inhibitor 3 from Mus musculus (Mouse).